A 417-amino-acid chain; its full sequence is MASEKSFKKRKITDDVDGVGVGGGLESLPEDIIADIFSRLPISSIARLMFVCRSWRSVLTQHGRLSSSSSSPTKPCLLLHCDSPIRNGLHFLDLSEEEKRIKTKKFTLRFASSMPEFDVVGSCNGLLCLSDSLYNDSLYLYNPFTTNSLELPECSNKYHDQELVFGFGFHEMTKEYKVLKIVYFRGSSSNNNGIYRGRGRIQYKQSEVQILTLSSKTTDQSLSWRSLGKAPYKFVKRSSEALVNGRLHFVTRPRRHVPDRKFVSFDLEDEEFKEIPKPDCGGLNRTNHRLVNLKGCLCAVVYGNYGKLDIWVMKTYGVKESWGKEYSIGTYLPKGLKQNLDRPMWIWKNAENGKVVRVLCLLENGEILLEYKSRVLVAYDPKLGKFKDLLFHGLPNWFHTVVHAGTLSWFDTPLDLW.

One can recognise an F-box domain in the interval 22-68; sequence GGGLESLPEDIIADIFSRLPISSIARLMFVCRSWRSVLTQHGRLSSS.

The protein is F-box protein At3g07870 of Arabidopsis thaliana (Mouse-ear cress).